A 395-amino-acid polypeptide reads, in one-letter code: Nickel and cobalt resistance protein CnrB (395 aa).

The chain crosses the membrane as a helical span at residues 13–33; the sequence is MIAGVAAVAAAVGFGAAHLPV. The disordered stretch occupies residues 35–55; sequence EKSPASTQAPEAQKPQSAPVK. The span at 37–50 shows a compositional bias: polar residues; the sequence is SPASTQAPEAQKPQ. Residues 140-193 adopt a coiled-coil conformation; that stretch reads AAERKVAQAKADLARKTYEREASLFQQGVTPRQEMEAAKAALDVAQAEALRAAT.

The protein belongs to the membrane fusion protein (MFP) (TC 8.A.1) family.

The protein localises to the cell inner membrane. Its function is as follows. The products of the genes cnrA, cnrB, and cnrC are likely to form a membrane-bound protein complex catalyzing an energy-dependent efflux of Ni(2+) and Co(2+). The mechanism of action of the CnrCBA complex may be that of a proton/cation antiporter. The protein is Nickel and cobalt resistance protein CnrB (cnrB) of Cupriavidus metallidurans (strain ATCC 43123 / DSM 2839 / NBRC 102507 / CH34) (Ralstonia metallidurans).